Reading from the N-terminus, the 508-residue chain is Lysine--tRNA ligase (508 aa).

2 residues coordinate Mg(2+): Glu-418 and Glu-425.

This sequence belongs to the class-II aminoacyl-tRNA synthetase family. In terms of assembly, homodimer. Requires Mg(2+) as cofactor.

It localises to the cytoplasm. It catalyses the reaction tRNA(Lys) + L-lysine + ATP = L-lysyl-tRNA(Lys) + AMP + diphosphate. In Burkholderia multivorans (strain ATCC 17616 / 249), this protein is Lysine--tRNA ligase.